The primary structure comprises 157 residues: Protein Smg (157 aa).

This sequence belongs to the Smg family.

The polypeptide is Protein Smg (Escherichia coli O139:H28 (strain E24377A / ETEC)).